We begin with the raw amino-acid sequence, 764 residues long: Phenylalanine--tRNA ligase beta subunit (764 aa).

The region spanning 38–148 is the tRNA-binding domain; it reads CIAPKNVVVG…GELVLGKELH (111 aa). A B5 domain is found at 375–455; it reads LKDCALTFQL…RFVGIDNLVS (81 aa). Residues Asp433, Asp439, Glu442, and Glu443 each coordinate Mg(2+). The region spanning 673 to 763 is the FDX-ACB domain; that stretch reads SIYPSSVRDL…LEKEFNARLK (91 aa).

It belongs to the phenylalanyl-tRNA synthetase beta subunit family. Type 1 subfamily. As to quaternary structure, tetramer of two alpha and two beta subunits. The cofactor is Mg(2+).

The protein localises to the cytoplasm. The enzyme catalyses tRNA(Phe) + L-phenylalanine + ATP = L-phenylalanyl-tRNA(Phe) + AMP + diphosphate + H(+). In Helicobacter pylori (strain J99 / ATCC 700824) (Campylobacter pylori J99), this protein is Phenylalanine--tRNA ligase beta subunit (pheT).